The chain runs to 257 residues: K88 minor fimbrial subunit FaeJ (257 aa).

The first 26 residues, 1–26 (MLNIIHRLKSGMFPALFFLTSASVLA), serve as a signal peptide directing secretion.

The protein localises to the fimbrium. Functionally, K88 minor fimbrial subunit, plays an essential role in the biogenesis of the K88 fimbriae. Fimbriae (also called pili), are polar filaments radiating from the surface of the bacterium to a length of 0.5-1.5 micrometers and numbering 100-300 per cell. They enable bacteria to colonize the epithelium of specific host organs. The sequence is that of K88 minor fimbrial subunit FaeJ (faeJ) from Escherichia coli.